The chain runs to 514 residues: Pentatricopeptide repeat-containing protein At4g26800 (514 aa).

11 PPR repeats span residues aspartate 122–proline 156, aspartate 157–arginine 191, aspartate 192–proline 226, asparagine 227–proline 261, asparagine 262–proline 296, asparagine 297–proline 331, asparagine 332–alanine 366, asparagine 367–proline 401, asparagine 402–leucine 436, aspartate 437–proline 471, and aspartate 472–proline 510.

The protein belongs to the PPR family. P subfamily.

This is Pentatricopeptide repeat-containing protein At4g26800 from Arabidopsis thaliana (Mouse-ear cress).